The primary structure comprises 230 residues: Thymidylate kinase (230 aa).

20–27 contributes to the ATP binding site; sequence GGEGAGKS.

The protein belongs to the thymidylate kinase family.

The catalysed reaction is dTMP + ATP = dTDP + ADP. Functionally, phosphorylation of dTMP to form dTDP in both de novo and salvage pathways of dTTP synthesis. The protein is Thymidylate kinase of Rhodopseudomonas palustris (strain BisB18).